The sequence spans 296 residues: GTPase Era (296 aa).

Residues 2-171 form the Era-type G domain; the sequence is KAGFIAVVGR…LEALDPYLED (170 aa). A G1 region spans residues 10–17; sequence GRPNVGKS. Residue 10–17 participates in GTP binding; sequence GRPNVGKS. Positions 36–40 are G2; that stretch reads GTTRD. The G3 stretch occupies residues 57–60; the sequence is DTPG. GTP is bound by residues 57–61 and 120–123; these read DTPGI and NKVD. Residues 120-123 are G4; the sequence is NKVD. The segment at 150–152 is G5; it reads ASG. Positions 202-279 constitute a KH type-2 domain; sequence TRDEIPHSVA…YLGLWVKVKD (78 aa).

This sequence belongs to the TRAFAC class TrmE-Era-EngA-EngB-Septin-like GTPase superfamily. Era GTPase family. Monomer.

The protein localises to the cytoplasm. Its subcellular location is the cell inner membrane. Functionally, an essential GTPase that binds both GDP and GTP, with rapid nucleotide exchange. Plays a role in 16S rRNA processing and 30S ribosomal subunit biogenesis and possibly also in cell cycle regulation and energy metabolism. This chain is GTPase Era, found in Fusobacterium nucleatum subsp. nucleatum (strain ATCC 25586 / DSM 15643 / BCRC 10681 / CIP 101130 / JCM 8532 / KCTC 2640 / LMG 13131 / VPI 4355).